The following is a 247-amino-acid chain: Uridylate kinase (247 aa).

17–20 (KFSG) contributes to the ATP binding site. Gly59 contributes to the UMP binding site. Gly60 and Arg64 together coordinate ATP. UMP contacts are provided by residues Asp79 and 140 to 147 (TGNPFFTT). ATP contacts are provided by Thr167, Tyr173, and Asp176.

It belongs to the UMP kinase family. In terms of assembly, homohexamer.

Its subcellular location is the cytoplasm. The enzyme catalyses UMP + ATP = UDP + ADP. The protein operates within pyrimidine metabolism; CTP biosynthesis via de novo pathway; UDP from UMP (UMPK route): step 1/1. Its activity is regulated as follows. Inhibited by UTP. Functionally, catalyzes the reversible phosphorylation of UMP to UDP. The polypeptide is Uridylate kinase (Legionella pneumophila subsp. pneumophila (strain Philadelphia 1 / ATCC 33152 / DSM 7513)).